The sequence spans 265 residues: 4-hydroxy-tetrahydrodipicolinate reductase (265 aa).

NAD(+) contacts are provided by residues glycine 7–methionine 12 and aspartate 33. Arginine 34 lines the NADP(+) pocket. NAD(+) is bound by residues glycine 96 to threonine 98 and alanine 120 to methionine 123. Histidine 153 acts as the Proton donor/acceptor in catalysis. Histidine 154 serves as a coordination point for (S)-2,3,4,5-tetrahydrodipicolinate. Lysine 157 functions as the Proton donor in the catalytic mechanism. Glycine 163–threonine 164 contributes to the (S)-2,3,4,5-tetrahydrodipicolinate binding site.

It belongs to the DapB family.

It localises to the cytoplasm. It carries out the reaction (S)-2,3,4,5-tetrahydrodipicolinate + NAD(+) + H2O = (2S,4S)-4-hydroxy-2,3,4,5-tetrahydrodipicolinate + NADH + H(+). It catalyses the reaction (S)-2,3,4,5-tetrahydrodipicolinate + NADP(+) + H2O = (2S,4S)-4-hydroxy-2,3,4,5-tetrahydrodipicolinate + NADPH + H(+). The protein operates within amino-acid biosynthesis; L-lysine biosynthesis via DAP pathway; (S)-tetrahydrodipicolinate from L-aspartate: step 4/4. Its function is as follows. Catalyzes the conversion of 4-hydroxy-tetrahydrodipicolinate (HTPA) to tetrahydrodipicolinate. This Burkholderia ambifaria (strain MC40-6) protein is 4-hydroxy-tetrahydrodipicolinate reductase.